A 98-amino-acid chain; its full sequence is NADH-ubiquinone oxidoreductase chain 4L (98 aa).

The next 3 helical transmembrane spans lie at 1–21, 29–49, and 58–78; these read MTPVHFSFTSAFILGLMGLAF, ALLCLEGMMLSLFIALSLWAL, and VAPMLLLAFSACEASAGLALL.

This sequence belongs to the complex I subunit 4L family.

It is found in the mitochondrion membrane. The catalysed reaction is a ubiquinone + NADH + 5 H(+)(in) = a ubiquinol + NAD(+) + 4 H(+)(out). Core subunit of the mitochondrial membrane respiratory chain NADH dehydrogenase (Complex I) which catalyzes electron transfer from NADH through the respiratory chain, using ubiquinone as an electron acceptor. Part of the enzyme membrane arm which is embedded in the lipid bilayer and involved in proton translocation. This chain is NADH-ubiquinone oxidoreductase chain 4L (MT-ND4L), found in Salmo salar (Atlantic salmon).